A 353-amino-acid polypeptide reads, in one-letter code: Phosphoribosylformylglycinamidine cyclo-ligase (353 aa).

This sequence belongs to the AIR synthase family.

The protein resides in the cytoplasm. It carries out the reaction 2-formamido-N(1)-(5-O-phospho-beta-D-ribosyl)acetamidine + ATP = 5-amino-1-(5-phospho-beta-D-ribosyl)imidazole + ADP + phosphate + H(+). The protein operates within purine metabolism; IMP biosynthesis via de novo pathway; 5-amino-1-(5-phospho-D-ribosyl)imidazole from N(2)-formyl-N(1)-(5-phospho-D-ribosyl)glycinamide: step 2/2. The chain is Phosphoribosylformylglycinamidine cyclo-ligase from Dinoroseobacter shibae (strain DSM 16493 / NCIMB 14021 / DFL 12).